Consider the following 140-residue polypeptide: Short-chain diamines transporter (140 aa).

4 helical membrane-spanning segments follow: residues Ile-7–Leu-27, Leu-36–Leu-56, Val-79–Ile-99, and Leu-105–Leu-125.

The protein belongs to the proteobacterial antimicrobial compound efflux (PACE) (TC 2.A.117) family.

The protein localises to the cell inner membrane. Mediates the efflux of short-chain diamines when energized by an electrochemical gradient. Confers resistance to chlorhexidine, benzalkonium, proflavine and acriflavine. Mediates efflux of both proflavine and acriflavine via an energy-dependent mechanism. In Vibrio parahaemolyticus serotype O3:K6 (strain RIMD 2210633), this protein is Short-chain diamines transporter.